We begin with the raw amino-acid sequence, 862 residues long: DNA mismatch repair protein MutS (862 aa).

618 to 625 (GPNMGGKS) serves as a coordination point for ATP. A disordered region spans residues 799–824 (QLESRDNQASPAVASAPQQQSLSLSP). Positions 806 to 824 (QASPAVASAPQQQSLSLSP) are enriched in low complexity.

This sequence belongs to the DNA mismatch repair MutS family.

This protein is involved in the repair of mismatches in DNA. It is possible that it carries out the mismatch recognition step. This protein has a weak ATPase activity. In Shewanella denitrificans (strain OS217 / ATCC BAA-1090 / DSM 15013), this protein is DNA mismatch repair protein MutS.